A 196-amino-acid chain; its full sequence is Putative NADH dehydrogenase/NAD(P)H nitroreductase Smal_0358 (196 aa).

It belongs to the nitroreductase family. HadB/RutE subfamily. It depends on FMN as a cofactor.

In Stenotrophomonas maltophilia (strain R551-3), this protein is Putative NADH dehydrogenase/NAD(P)H nitroreductase Smal_0358.